We begin with the raw amino-acid sequence, 465 residues long: Ribulose bisphosphate carboxylase large chain (465 aa).

An N6,N6,N6-trimethyllysine modification is found at Lys-4. Residues Asn-113 and Thr-163 each coordinate substrate. Lys-165 acts as the Proton acceptor in catalysis. Lys-167 serves as a coordination point for substrate. Mg(2+) is bound by residues Lys-191, Asp-193, and Glu-194. N6-carboxylysine is present on Lys-191. His-284 functions as the Proton acceptor in the catalytic mechanism. Substrate-binding residues include Arg-285, His-317, and Ser-369.

The protein belongs to the RuBisCO large chain family. Type I subfamily. In terms of assembly, heterohexadecamer of 8 large chains and 8 small chains; disulfide-linked. The disulfide link is formed within the large subunit homodimers. The cofactor is Mg(2+). In terms of processing, the disulfide bond which can form in the large chain dimeric partners within the hexadecamer appears to be associated with oxidative stress and protein turnover.

Its subcellular location is the plastid. The protein resides in the chloroplast. The catalysed reaction is 2 (2R)-3-phosphoglycerate + 2 H(+) = D-ribulose 1,5-bisphosphate + CO2 + H2O. It catalyses the reaction D-ribulose 1,5-bisphosphate + O2 = 2-phosphoglycolate + (2R)-3-phosphoglycerate + 2 H(+). In terms of biological role, ruBisCO catalyzes two reactions: the carboxylation of D-ribulose 1,5-bisphosphate, the primary event in carbon dioxide fixation, as well as the oxidative fragmentation of the pentose substrate in the photorespiration process. Both reactions occur simultaneously and in competition at the same active site. The protein is Ribulose bisphosphate carboxylase large chain of Morella cerifera (Wax myrtle).